The following is a 355-amino-acid chain: Histidinol-phosphate aminotransferase (355 aa).

An N6-(pyridoxal phosphate)lysine modification is found at lysine 222.

This sequence belongs to the class-II pyridoxal-phosphate-dependent aminotransferase family. Histidinol-phosphate aminotransferase subfamily. It depends on pyridoxal 5'-phosphate as a cofactor.

The enzyme catalyses L-histidinol phosphate + 2-oxoglutarate = 3-(imidazol-4-yl)-2-oxopropyl phosphate + L-glutamate. It participates in amino-acid biosynthesis; L-histidine biosynthesis; L-histidine from 5-phospho-alpha-D-ribose 1-diphosphate: step 7/9. This chain is Histidinol-phosphate aminotransferase, found in Natronomonas pharaonis (strain ATCC 35678 / DSM 2160 / CIP 103997 / JCM 8858 / NBRC 14720 / NCIMB 2260 / Gabara) (Halobacterium pharaonis).